Consider the following 169-residue polypeptide: ATP synthase subunit b (169 aa).

The helical transmembrane segment at 14–34 threads the bilayer; that stretch reads TFLAMLISFLILVFILQQVAF.

It belongs to the ATPase B chain family. F-type ATPases have 2 components, F(1) - the catalytic core - and F(0) - the membrane proton channel. F(1) has five subunits: alpha(3), beta(3), gamma(1), delta(1), epsilon(1). F(0) has four main subunits: a(1), b(2) and c(10-14). The alpha and beta chains form an alternating ring which encloses part of the gamma chain. F(1) is attached to F(0) by a central stalk formed by the gamma and epsilon chains, while a peripheral stalk is formed by the delta and b chains.

It is found in the cell membrane. Functionally, f(1)F(0) ATP synthase produces ATP from ADP in the presence of a proton or sodium gradient. F-type ATPases consist of two structural domains, F(1) containing the extramembraneous catalytic core and F(0) containing the membrane proton channel, linked together by a central stalk and a peripheral stalk. During catalysis, ATP synthesis in the catalytic domain of F(1) is coupled via a rotary mechanism of the central stalk subunits to proton translocation. Its function is as follows. Component of the F(0) channel, it forms part of the peripheral stalk, linking F(1) to F(0). This chain is ATP synthase subunit b, found in Heliobacterium modesticaldum (strain ATCC 51547 / Ice1).